Reading from the N-terminus, the 455-residue chain is Aminopeptidase YwaD (455 aa).

The signal sequence occupies residues 1-31; the sequence is MKKLLTVMTMAVLTAGTLLLPAQSVTPAAHA. 5 residues coordinate Zn(2+): His250, Asp262, Glu295, Asp323, and His401.

This sequence belongs to the peptidase M28 family. M28B subfamily. Monomer. It depends on Zn(2+) as a cofactor.

The protein localises to the secreted. The catalysed reaction is Release of N-terminal Arg and Lys from oligopeptides when P1' is not Pro. Also acts on arylamides of Arg and Lys.. It catalyses the reaction Release of an N-terminal amino acid, preferentially leucine, but not glutamic or aspartic acids.. Catalyzes the hydrolysis of a range of N-terminal amino acids. The chain is Aminopeptidase YwaD (ywaD) from Bacillus subtilis (strain 168).